Consider the following 762-residue polypeptide: Putative cation exchanger YDL206W (762 aa).

Positions 1–26 (MHKPLRWLITIAFYVSNVILIGYSLS) are cleaved as a signal peptide. Residues 27 to 30 (SNGS) are Extracellular-facing. Residue N28 is glycosylated (N-linked (GlcNAc...) asparagine). The chain crosses the membrane as a helical span at residues 31–51 (ISEFYLHSVVLIECFSLLGVV). At 52–102 (TSDCLTPSLSYISSNIFHISDRVSGMTLLALGNALPDITSTYQSMKSGVTS) the chain is on the cytoplasmic side. A helical membrane pass occupies residues 103 to 123 (LAIGELFGGIFFLLTVVIGLM). Over 124 to 156 (GCVATIQFQHDKSIETYTEESFDQNLSYDRSNY) the chain is Extracellular. Residue N148 is glycosylated (N-linked (GlcNAc...) asparagine). A helical membrane pass occupies residues 157–177 (ILDVGIFTFMLLVSGTFLADG). A topological domain (cytoplasmic) is located at residue R178. A helical transmembrane segment spans residues 179 to 199 (LYFWECIVMVLTYCCCAVYLI). Topologically, residues 200 to 501 (KSYKYPCEIN…YNYLTDVSLE (302 aa)) are extracellular. Residues N280 and N329 are each glycosylated (N-linked (GlcNAc...) asparagine). Residues 502–522 (IGFFEFLSLLVTTPVSIILYL) traverse the membrane as a helical segment. Residues 523–554 (SIPSEISQTDHDLPLSYLQNIQLIASPIILNQ) are Cytoplasmic-facing. The helical transmembrane segment at 555–575 (LITNNFSFWLLILSLVIAILL) threads the bilayer. At 576–589 (YFKTRTIPNKFNSD) the chain is on the extracellular side. A helical membrane pass occupies residues 590–610 (IIFTVAFLLSLACLSKAVHII). At 611–615 (VVTLT) the chain is on the cytoplasmic side. The helical transmembrane segment at 616–636 (HWINVFNISETILGLTIFTWG) threads the bilayer. The Extracellular portion of the chain corresponds to 637-650 (NSIGDLVSNITFVK). An N-linked (GlcNAc...) asparagine glycan is attached at N645. Residues 651–671 (IGVLEIAIGACFGSPLLYFLF) form a helical membrane-spanning segment. The Cytoplasmic portion of the chain corresponds to 672-709 (GVGFDGIMIMLGDKTGKIVSGRDSNILMHHIDFKVDKN). A helical membrane pass occupies residues 710 to 730 (LINTGVGILIAFLIFTVLIPL). The Extracellular segment spans residues 731–738 (NDWKIDKK). Residues 739 to 759 (ISIALLTLYIVVTCISVFLEV) traverse the membrane as a helical segment. Topologically, residues 760–762 (HQV) are cytoplasmic.

Belongs to the Ca(2+):cation antiporter (CaCA) (TC 2.A.19) family.

It localises to the membrane. Putative cation exchanger. This chain is Putative cation exchanger YDL206W, found in Saccharomyces cerevisiae (strain ATCC 204508 / S288c) (Baker's yeast).